Reading from the N-terminus, the 514-residue chain is Membrane-bound lytic murein transglycosylase F (514 aa).

A signal peptide spans 1–30 (MKKLKINYLFIGILTLLLAAALWPSIPWFG). Residues 31–269 (KTENHIAAIQ…RIEEKYLGHG (239 aa)) are non-LT domain. Positions 270–514 (DDFDYVDTRS…LFTPQKKEEK (245 aa)) are LT domain. Glu314 is a catalytic residue.

It in the N-terminal section; belongs to the bacterial solute-binding protein 3 family. The protein in the C-terminal section; belongs to the transglycosylase Slt family.

Its subcellular location is the cell outer membrane. It carries out the reaction Exolytic cleavage of the (1-&gt;4)-beta-glycosidic linkage between N-acetylmuramic acid (MurNAc) and N-acetylglucosamine (GlcNAc) residues in peptidoglycan, from either the reducing or the non-reducing ends of the peptidoglycan chains, with concomitant formation of a 1,6-anhydrobond in the MurNAc residue.. Murein-degrading enzyme that degrades murein glycan strands and insoluble, high-molecular weight murein sacculi, with the concomitant formation of a 1,6-anhydromuramoyl product. Lytic transglycosylases (LTs) play an integral role in the metabolism of the peptidoglycan (PG) sacculus. Their lytic action creates space within the PG sacculus to allow for its expansion as well as for the insertion of various structures such as secretion systems and flagella. The chain is Membrane-bound lytic murein transglycosylase F from Salmonella typhimurium (strain LT2 / SGSC1412 / ATCC 700720).